The chain runs to 487 residues: Nitrate reductase beta chain (487 aa).

4Fe-4S ferredoxin-type domains follow at residues isoleucine 7 to alanine 36, valine 172 to glutamate 203, and glycine 205 to glutamine 234. Cysteine 16, cysteine 19, cysteine 22, cysteine 26, cysteine 181, cysteine 184, and cysteine 189 together coordinate [4Fe-4S] cluster. [3Fe-4S] cluster is bound by residues cysteine 193, cysteine 214, and cysteine 220. Positions 224, 241, 244, 256, and 260 each coordinate [4Fe-4S] cluster.

Requires [4Fe-4S] cluster as cofactor. It depends on [3Fe-4S] cluster as a cofactor.

The protein resides in the cell membrane. The catalysed reaction is nitrate + a quinol = a quinone + nitrite + H2O. The beta chain is an electron transfer unit containing four cysteine clusters involved in the formation of iron-sulfur centers. Electrons are transferred from the gamma chain to the molybdenum cofactor of the alpha subunit. This chain is Nitrate reductase beta chain (narH), found in Bacillus subtilis (strain 168).